Consider the following 480-residue polypeptide: M-phase inducer phosphatase cdc-25.2 (480 aa).

Residues 1–20 (MNRPSQISQDVAQPLSNQHE) show a composition bias toward polar residues. The disordered stretch occupies residues 1–35 (MNRPSQISQDVAQPLSNQHETAMMSSDEDSMSRDS). The 107-residue stretch at 243 to 349 (FDDKYILIDC…FFFAANEANI (107 aa)) folds into the Rhodanese domain. The disordered stretch occupies residues 411 to 452 (TSAPSTSTENIDTNDDCQKSRTPAVPRIASRRNLFSDPSHSP).

Belongs to the MPI phosphatase family.

The enzyme catalyses O-phospho-L-tyrosyl-[protein] + H2O = L-tyrosyl-[protein] + phosphate. Functionally, required for intestinal cell division following the 16E cell stage of embryogenesis. Regulates intestinal cell divisions and binucleations probably by modulating the activity of the cell cycle regulator wee-1.3 and by activating the cdk-1/cyb-1 complex. Plays a role in male tail development, via regulation of the cell divisions of the ray precursor cell lineages, perhaps acting together with cell cycle regulators cyl-1, cdk-1, cyb-3, and cyd-1. The protein is M-phase inducer phosphatase cdc-25.2 of Caenorhabditis elegans.